Reading from the N-terminus, the 125-residue chain is Cystatin-like cysteine protease inhibitor EPIC2B (125 aa).

A signal peptide spans methionine 1–alanine 21. Asparagine 45 carries N-linked (GlcNAc...) asparagine glycosylation. Residues glutamine 68–glycine 72 carry the Secondary area of contact motif.

This sequence belongs to the cystatin family. Interacts with the host papain-like cysteine protease PIP1. Interacts with the host papain-like cysteine protease RCR3. Interacts with the host papain-like cysteine protease C14.

The protein resides in the secreted. Its function is as follows. Secreted effector that interacts with and inhibits the pathogenesis-related papain-like cysteine proteases C14, PIP1 and RCR3 of host plants. Inhibition of host proteases by a pathogen extracellular protease inhibitor forms a specific type of defense-counterdefense mechanism between plants and microbial pathogens. The protein is Cystatin-like cysteine protease inhibitor EPIC2B of Phytophthora infestans (strain T30-4) (Potato late blight agent).